Here is a 452-residue protein sequence, read N- to C-terminus: Probable ECA polymerase (452 aa).

A run of 11 helical transmembrane segments spans residues 6 to 26 (FSGL…LTWF), 37 to 57 (VFFS…TSVL), 63 to 83 (VGVA…CFYG), 118 to 138 (VILM…NGFL), 155 to 175 (GVAL…VYFL), 181 to 201 (AWLF…MIVG), 207 to 227 (IIIA…ISLW), 228 to 248 (MLVA…LKRY), 341 to 361 (LVVM…GLII), 378 to 398 (YKAA…IVLA), and 410 to 430 (VFFL…FWLF).

It belongs to the WzyE family. In terms of assembly, probably part of a complex composed of WzxE, WzyE and WzzE.

It localises to the cell inner membrane. The protein operates within bacterial outer membrane biogenesis; enterobacterial common antigen biosynthesis. In terms of biological role, probably involved in the polymerization of enterobacterial common antigen (ECA) trisaccharide repeat units. The polypeptide is Probable ECA polymerase (Salmonella agona (strain SL483)).